A 240-amino-acid chain; its full sequence is Phosphoribosylaminoimidazole-succinocarboxamide synthase (240 aa).

Belongs to the SAICAR synthetase family.

The catalysed reaction is 5-amino-1-(5-phospho-D-ribosyl)imidazole-4-carboxylate + L-aspartate + ATP = (2S)-2-[5-amino-1-(5-phospho-beta-D-ribosyl)imidazole-4-carboxamido]succinate + ADP + phosphate + 2 H(+). It functions in the pathway purine metabolism; IMP biosynthesis via de novo pathway; 5-amino-1-(5-phospho-D-ribosyl)imidazole-4-carboxamide from 5-amino-1-(5-phospho-D-ribosyl)imidazole-4-carboxylate: step 1/2. In Coxiella burnetii (strain RSA 493 / Nine Mile phase I), this protein is Phosphoribosylaminoimidazole-succinocarboxamide synthase.